The following is an 81-amino-acid chain: ATP synthase subunit c, chloroplastic (81 aa).

2 consecutive transmembrane segments (helical) span residues 3 to 23 (PLIA…ASIG) and 57 to 77 (LAFM…LLFA).

The protein belongs to the ATPase C chain family. In terms of assembly, F-type ATPases have 2 components, F(1) - the catalytic core - and F(0) - the membrane proton channel. F(1) has five subunits: alpha(3), beta(3), gamma(1), delta(1), epsilon(1). F(0) has four main subunits: a(1), b(1), b'(1) and c(10-14). The alpha and beta chains form an alternating ring which encloses part of the gamma chain. F(1) is attached to F(0) by a central stalk formed by the gamma and epsilon chains, while a peripheral stalk is formed by the delta, b and b' chains.

It localises to the plastid. Its subcellular location is the chloroplast thylakoid membrane. In terms of biological role, f(1)F(0) ATP synthase produces ATP from ADP in the presence of a proton or sodium gradient. F-type ATPases consist of two structural domains, F(1) containing the extramembraneous catalytic core and F(0) containing the membrane proton channel, linked together by a central stalk and a peripheral stalk. During catalysis, ATP synthesis in the catalytic domain of F(1) is coupled via a rotary mechanism of the central stalk subunits to proton translocation. Its function is as follows. Key component of the F(0) channel; it plays a direct role in translocation across the membrane. A homomeric c-ring of between 10-14 subunits forms the central stalk rotor element with the F(1) delta and epsilon subunits. The polypeptide is ATP synthase subunit c, chloroplastic (Pisum sativum (Garden pea)).